Consider the following 435-residue polypeptide: Legumain (435 aa).

The signal sequence occupies residues 1-17 (MTWRVAVLLSLVLGAGA). Asn-93 is a glycosylation site (N-linked (GlcNAc...) asparagine). The active site involves His-150. The N-linked (GlcNAc...) asparagine glycan is linked to Asn-169. Cys-191 acts as the Nucleophile in catalysis. N-linked (GlcNAc...) asparagine glycosylation is found at Asn-265 and Asn-274. The propeptide occupies 326-435 (DVKESQNLIG…AMDKVCLSHY (110 aa)). Disulfide bonds link Cys-380/Cys-414 and Cys-392/Cys-431.

It belongs to the peptidase C13 family. As to quaternary structure, homodimer before autocatalytic removal of the propeptide. Monomer after autocatalytic processing. May interact with integrins. Glycosylated. Post-translationally, activated by autocatalytic processing at pH 4. As to expression, detected in kidney proximal tubules (at protein level). Ubiquitous. Particularly abundant in kidney and placenta.

It is found in the lysosome. It carries out the reaction Hydrolysis of proteins and small molecule substrates at -Asn-|-Xaa- bonds.. Inhibited by cystatin-C. Its function is as follows. Has a strict specificity for hydrolysis of asparaginyl bonds. Can also cleave aspartyl bonds slowly, especially under acidic conditions. Involved in the processing of proteins for MHC class II antigen presentation in the lysosomal/endosomal system. Also involved in MHC class I antigen presentation in cross-presenting dendritic cells by mediating cleavage and maturation of Perforin-2 (MPEG1), thereby promoting antigen translocation in the cytosol. Required for normal lysosomal protein degradation in renal proximal tubules. Required for normal degradation of internalized EGFR. Plays a role in the regulation of cell proliferation via its role in EGFR degradation. The polypeptide is Legumain (Lgmn) (Mus musculus (Mouse)).